Here is a 147-residue protein sequence, read N- to C-terminus: UPF0306 protein YhbP (147 aa).

It belongs to the UPF0306 family.

This is UPF0306 protein YhbP from Shigella boydii serotype 4 (strain Sb227).